Consider the following 318-residue polypeptide: NADH-ubiquinone oxidoreductase chain 1 (318 aa).

8 helical membrane passes run Phe-2–Leu-22, Tyr-71–Ile-91, Ile-98–Trp-118, Leu-146–Ile-166, His-171–Ala-191, Leu-222–Phe-242, Glu-253–Val-273, and Leu-294–Ile-314.

The protein belongs to the complex I subunit 1 family.

The protein localises to the mitochondrion inner membrane. It carries out the reaction a ubiquinone + NADH + 5 H(+)(in) = a ubiquinol + NAD(+) + 4 H(+)(out). Functionally, core subunit of the mitochondrial membrane respiratory chain NADH dehydrogenase (Complex I) that is believed to belong to the minimal assembly required for catalysis. Complex I functions in the transfer of electrons from NADH to the respiratory chain. The immediate electron acceptor for the enzyme is believed to be ubiquinone. In Nycticebus coucang (Slow loris), this protein is NADH-ubiquinone oxidoreductase chain 1 (MT-ND1).